The primary structure comprises 199 residues: ATP-dependent Clp protease proteolytic subunit (199 aa).

The active-site Nucleophile is the Ser102. His127 is an active-site residue.

Belongs to the peptidase S14 family. Fourteen ClpP subunits assemble into 2 heptameric rings which stack back to back to give a disk-like structure with a central cavity, resembling the structure of eukaryotic proteasomes.

It is found in the cytoplasm. The catalysed reaction is Hydrolysis of proteins to small peptides in the presence of ATP and magnesium. alpha-casein is the usual test substrate. In the absence of ATP, only oligopeptides shorter than five residues are hydrolyzed (such as succinyl-Leu-Tyr-|-NHMec, and Leu-Tyr-Leu-|-Tyr-Trp, in which cleavage of the -Tyr-|-Leu- and -Tyr-|-Trp bonds also occurs).. Cleaves peptides in various proteins in a process that requires ATP hydrolysis. Has a chymotrypsin-like activity. Plays a major role in the degradation of misfolded proteins. The polypeptide is ATP-dependent Clp protease proteolytic subunit (Pseudothermotoga lettingae (strain ATCC BAA-301 / DSM 14385 / NBRC 107922 / TMO) (Thermotoga lettingae)).